Here is a 200-residue protein sequence, read N- to C-terminus: Large ribosomal subunit protein uL4 (200 aa).

Positions 38–68 are disordered; that stretch reads GRQGSKQQKTRSDVRGGGKRPWRQKGTGRAR. Over residues 54–65 the composition is skewed to basic residues; it reads GGKRPWRQKGTG.

The protein belongs to the universal ribosomal protein uL4 family. As to quaternary structure, part of the 50S ribosomal subunit.

Its function is as follows. One of the primary rRNA binding proteins, this protein initially binds near the 5'-end of the 23S rRNA. It is important during the early stages of 50S assembly. It makes multiple contacts with different domains of the 23S rRNA in the assembled 50S subunit and ribosome. Forms part of the polypeptide exit tunnel. This is Large ribosomal subunit protein uL4 from Pseudomonas syringae pv. tomato (strain ATCC BAA-871 / DC3000).